The sequence spans 99 residues: Secreted RxLR effector protein 94 (99 aa).

The RxLR-dEER motif lies at 35–55 (RQLRQSANPSKAWHQWKSETR).

Belongs to the RxLR effector family.

It is found in the secreted. The protein resides in the host nucleus. The protein localises to the host cytoplasm. Its function is as follows. Secreted effector that completely suppresses the host cell death induced by cell death-inducing proteins. This is Secreted RxLR effector protein 94 from Plasmopara viticola (Downy mildew of grapevine).